Here is a 188-residue protein sequence, read N- to C-terminus: Interferon alpha-2 (188 aa).

An N-terminal signal peptide occupies residues 1 to 23 (MALTFALLVALLVLSCKSSCSVG). 2 disulfides stabilise this stretch: Cys-24/Cys-121 and Cys-52/Cys-161. Thr-129 carries an O-linked (GalNAc...) threonine glycan.

Belongs to the alpha/beta interferon family. Interacts with IFNAR2.

Its subcellular location is the secreted. Functionally, produced by macrophages, IFN-alpha have antiviral activities. The protein is Interferon alpha-2 (IFNA2) of Homo sapiens (Human).